The primary structure comprises 189 residues: MEQIDKQKIADAVKVILEAVGENPDREGLIDTPMRVARMYEEVFAGLKKDPSVHFDTIFEEQHEELVLVKDIRFSSMCEHHLVPFFGVAHVAYLPQNGRVAGLSKLARVVDDVSRRPQLQERITTTVAEIMMDKLKPLGVMVIMEAEHMCMTIRGVNKPGTKTITSAVRGAFKNDDKLRSEVLALIKHN.

Cys78, His81, and Cys150 together coordinate Zn(2+).

The protein belongs to the GTP cyclohydrolase I family. In terms of assembly, homomer.

The enzyme catalyses GTP + H2O = 7,8-dihydroneopterin 3'-triphosphate + formate + H(+). It functions in the pathway cofactor biosynthesis; 7,8-dihydroneopterin triphosphate biosynthesis; 7,8-dihydroneopterin triphosphate from GTP: step 1/1. This is GTP cyclohydrolase 1 from Listeria monocytogenes serotype 4a (strain HCC23).